The sequence spans 362 residues: 3-isopropylmalate dehydrogenase (362 aa).

75-88 (GPKWANLPPTEQPE) serves as a coordination point for NAD(+). 4 residues coordinate substrate: Arg96, Arg106, Arg135, and Asp224. Mg(2+) contacts are provided by Asp224, Asp248, and Asp252. 282 to 294 (GSAPDIAGLGVAN) contacts NAD(+).

The protein belongs to the isocitrate and isopropylmalate dehydrogenases family. LeuB type 1 subfamily. As to quaternary structure, homodimer. Requires Mg(2+) as cofactor. Mn(2+) is required as a cofactor.

It localises to the cytoplasm. It carries out the reaction (2R,3S)-3-isopropylmalate + NAD(+) = 4-methyl-2-oxopentanoate + CO2 + NADH. The protein operates within amino-acid biosynthesis; L-leucine biosynthesis; L-leucine from 3-methyl-2-oxobutanoate: step 3/4. Functionally, catalyzes the oxidation of 3-carboxy-2-hydroxy-4-methylpentanoate (3-isopropylmalate) to 3-carboxy-4-methyl-2-oxopentanoate. The product decarboxylates to 4-methyl-2 oxopentanoate. This is 3-isopropylmalate dehydrogenase from Colwellia psychrerythraea (strain 34H / ATCC BAA-681) (Vibrio psychroerythus).